The following is a 440-amino-acid chain: C4-dicarboxylate transport protein (440 aa).

A run of 8 helical transmembrane segments spans residues 8-28 (LYLQ…LFPA), 40-60 (FIKL…VTGI), 74-94 (LKGL…GLVV), 147-167 (GDIL…AALK), 187-207 (IVGF…AFTV), 221-241 (LIAC…GLVL), 288-308 (VVGL…SIYL), and 354-374 (AATL…LLGV). The disordered stretch occupies residues 419–440 (EEVEPANEPEPPAIPAGAGLHG).

It belongs to the dicarboxylate/amino acid:cation symporter (DAACS) (TC 2.A.23) family.

It is found in the cell inner membrane. Responsible for the transport of dicarboxylates such as succinate, fumarate, and malate from the periplasm across the membrane. The protein is C4-dicarboxylate transport protein of Anaeromyxobacter sp. (strain K).